Here is a 69-residue protein sequence, read N- to C-terminus: Nodulin-3 (69 aa).

A signal peptide spans 1 to 24 (MAKILKFVFAIILFFSLFLLSMEA).

The sequence is that of Nodulin-3 (ENOD3) from Pisum sativum (Garden pea).